An 82-amino-acid polypeptide reads, in one-letter code: Conotoxin Tx6.6 (82 aa).

An N-terminal signal peptide occupies residues 1–19; that stretch reads MKLTCVMIVAVLFLTAWTL. Residues 20–51 constitute a propeptide that is removed on maturation; sequence VMADDSNNGLANLFSKLRDEMEDPEGSKLEKK. Cystine bridges form between Cys-53/Cys-71, Cys-60/Cys-76, and Cys-70/Cys-81. Ala-82 is subject to Alanine amide; partial.

It belongs to the O1 superfamily. Expressed by the venom duct.

The protein resides in the secreted. Omega-conotoxins act at presynaptic membranes, they bind and block voltage-gated calcium channels (Cav). The sequence is that of Conotoxin Tx6.6 from Conus textile (Cloth-of-gold cone).